Consider the following 219-residue polypeptide: Exosomal polycystin-1-interacting protein (219 aa).

Positions 1 to 19 are cleaved as a signal peptide; sequence MAPPSRHCLLLISTLGVFA. 5 N-linked (GlcNAc...) asparagine glycosylation sites follow: Asn-29, Asn-42, Asn-95, Asn-188, and Asn-210.

The protein belongs to the EPCIP family. As to quaternary structure, homooligomer. Interacts with PKD1 (via the PKD repeats in the N-terminal extracellular region); the interaction is not dependent on N-glycosylation of either protein. In terms of processing, N-glycosylated. As to expression, detected in the kidney and in the endothelium of large blood vessels (at protein level).

It is found in the vesicle. The protein localises to the secreted. Its subcellular location is the extracellular exosome. In terms of biological role, likely to be involved with PKD1 in the detection, sequestration and exocytosis of senescent mitochondria. The protein is Exosomal polycystin-1-interacting protein of Homo sapiens (Human).